Here is a 446-residue protein sequence, read N- to C-terminus: Gasdermin-A (446 aa).

The segment at 1–252 (MTMFENVTRA…FILIQASDVG (252 aa)) is triggers pyroptosis. Residue 9–13 (RALAR) coordinates a cardiolipin. 4 beta stranded membrane passes run 78-95 (NFSF…DVDV), 99-120 (VKVK…TLSV), 164-180 (VTLE…SLPF), and 184-198 (LGLQ…AVTI).

Belongs to the gasdermin family. Homooligomer; homooligomeric ring-shaped pore complex containing 18-36 subunits when inserted in the membrane. In terms of processing, cleavage by bacterial SpeB relieves autoinhibition by releasing the N-terminal moiety (Gasdermin-A, N-terminal) that initiates pyroptosis. Post-translationally, palmitoylated. Expressed predominantly in the gastrointestinal (GI) tract and in the skin at a lower level. In the GI tract, the expression is highly restricted to the esophagus and forestomach.

It localises to the cytoplasm. Its subcellular location is the perinuclear region. The protein resides in the cytosol. The protein localises to the cell membrane. Its activity is regulated as follows. The full-length protein before cleavage is inactive: intramolecular interactions between N- and C-terminal domains mediate autoinhibition in the absence of activation signal. The intrinsic pyroptosis-inducing activity is carried by the released N-terminal moiety (Gasdermin-A, N-terminal) following cleavage by bacterial effector protein SpeB. In terms of biological role, this form constitutes the precursor of the pore-forming protein and acts as a sensor of bacterial infection: upon infection, specifically cleaved by bacterial effector protein SpeB in epithelial cells, releasing the N-terminal moiety (Gasdermin-A, N-terminal) that binds to membranes and forms pores, triggering pyroptosis. Its function is as follows. Pore-forming protein that causes membrane permeabilization and pyroptosis. Released upon cleavage by bacterial effector protein SpeB, and binds to membrane inner leaflet lipids. Homooligomerizes within the membrane and forms pores of 10-15 nanometers (nm) of inner diameter, triggering pyroptosis. Pyroptosis triggers the elimination of the infected skin cell, depriving the pathogen of its protective niche, while inducing an inflammatory response. This ultimately prevents bacterial penetration of the epithelial barrier and a subsequent systemic dissemination of the pathogen. Binds to cardiolipin and other acidic phospholipids, such as phosphatidylserine, which mediate its targeting to the inner leaflet membrane. The polypeptide is Gasdermin-A (Gsdma) (Mus musculus (Mouse)).